The following is a 282-amino-acid chain: Tumor necrosis factor ligand superfamily member 6 (282 aa).

Residues 1 to 82 are Cytoplasmic-facing; it reads MQQPFNYPYP…KKKRDHNAGL (82 aa). A disordered region spans residues 30–73; it reads FPCPASVPGRPGQRRPPPPPPPPPPPPTLLPSRPLPPLPPPSLK. Pro residues predominate over residues 43–71; the sequence is RRPPPPPPPPPPPPTLLPSRPLPPLPPPS. The helical; Signal-anchor for type II membrane protein transmembrane segment at 83–103 threads the bilayer; it reads CLLVMFFMVLVALVGLGLGMF. Residues 104 to 282 are Extracellular-facing; the sequence is QLFHLQKELT…SKTFFGLYKL (179 aa). Residues 119 to 132 show a composition bias toward basic and acidic residues; the sequence is ASQRHTESSLEKQI. Residues 119–140 form a disordered region; sequence ASQRHTESSLEKQIGHPNLPSE. The THD domain maps to 146–282; sequence KVAHLTGKPN…SKTFFGLYKL (137 aa). The N-linked (GlcNAc...) asparagine glycan is linked to Asn185. Cysteines 203 and 234 form a disulfide. Asn251 and Asn261 each carry an N-linked (GlcNAc...) asparagine glycan.

Belongs to the tumor necrosis factor family. As to quaternary structure, homotrimer. Interacts with ARHGAP9, BAIAP2L1, BTK, CACNB3, CACNB4, CRK, DLG2, DNMBP, DOCK4, EPS8L3, FGR, FYB1, FYN, HCK, ITK, ITSN2, KALRN, LYN, MACC1, MIA, MPP4, MYO15A, NCF1, NCK1, NCK2, NCKIPSD, OSTF1, PIK3R1, PSTPIP1, RIMBP3C, SAMSN1, SH3GL3, SH3PXD2B, SH3PXD2A, SH3RF2, SKAP2, SNX33, SNX9, SORBS3, SPTA1, SRC, SRGAP1, SRGAP2, SRGAP3, TEC, TJP3 and YES1. Post-translationally, the soluble form derives from the membrane form by proteolytic processing. The membrane-bound form undergoes two successive intramembrane proteolytic cleavages. The first one is processed by ADAM10 producing an N-terminal fragment, which lacks the receptor-binding extracellular domain. This ADAM10-processed FasL (FasL APL) remnant form is still membrane anchored and further processed by SPPL2A that liberates the FasL intracellular domain (FasL ICD). FasL shedding by ADAM10 is a prerequisite for subsequent intramembrane cleavage by SPPL2A in T-cells. Phosphorylated by FGR on tyrosine residues; this is required for ubiquitination and subsequent internalization. In terms of processing, N-glycosylated. Glycosylation enhances apoptotic activity. Post-translationally, monoubiquitinated.

Its subcellular location is the cell membrane. It is found in the cytoplasmic vesicle lumen. The protein localises to the lysosome lumen. It localises to the secreted. The protein resides in the nucleus. Cytokine that binds to TNFRSF6/FAS, a receptor that transduces the apoptotic signal into cells. Involved in cytotoxic T-cell-mediated apoptosis, natural killer cell-mediated apoptosis and in T-cell development. Initiates fratricidal/suicidal activation-induced cell death (AICD) in antigen-activated T-cells contributing to the termination of immune responses. TNFRSF6/FAS-mediated apoptosis also has a role in the induction of peripheral tolerance. Binds to TNFRSF6B/DcR3, a decoy receptor that blocks apoptosis. In terms of biological role, induces FAS-mediated activation of NF-kappa-B, initiating non-apoptotic signaling pathways. Can induce apoptosis but does not appear to be essential for this process. Its function is as follows. Cytoplasmic form induces gene transcription inhibition. The chain is Tumor necrosis factor ligand superfamily member 6 (FASLG) from Sus scrofa (Pig).